A 130-amino-acid polypeptide reads, in one-letter code: D-ribose pyranase (130 aa).

The active-site Proton donor is H20. Substrate is bound by residues D28, H97, and 119–121 (YAN).

The protein belongs to the RbsD / FucU family. RbsD subfamily. In terms of assembly, homodecamer.

The protein localises to the cytoplasm. It catalyses the reaction beta-D-ribopyranose = beta-D-ribofuranose. The protein operates within carbohydrate metabolism; D-ribose degradation; D-ribose 5-phosphate from beta-D-ribopyranose: step 1/2. Functionally, catalyzes the interconversion of beta-pyran and beta-furan forms of D-ribose. The chain is D-ribose pyranase from Thermoanaerobacter pseudethanolicus (strain ATCC 33223 / 39E) (Clostridium thermohydrosulfuricum).